The sequence spans 434 residues: MELHHPELTYAAIVALAAVLCGGMMTRLKQPAVVGYILAGVVLGPSGFGLVSNRDAVATLAEFGVLMLLFVIGMKLDIIRFLEVWKTAIFTTVLQIAGSVGTALLLRHGLGWSLGLAVVLGCAVAVSSTAVVIKVLESSDELDTPVGRTTLGILIAQDMAVVPMMLVLESFETKALLPADMARVVLSVLFLVLLFWWLSKRRIDLPITARLSRDSDLATLSTLAWCFGTAAISGVLDLSPAYGAFLGGVVLGNSAQRDMLLKRAQPIGSVLLMVFFLSIGLLLDFKFIWKNLGTVLTLLAMVTLFKTALNVTALRLARQDWPSAFLAGVALAQIGEFSFLLAETGKAVKLISAQETKLVVAVTVLSLVLSPFWLFTMRRMHRVAAVHVHSFRDLVTRLYGDEARAFARTARRARVLVRRGSWRDDPNAGPGSGI.

The next 10 membrane-spanning stretches (helical) occupy residues 6-26 (PELTYAAIVALAAVLCGGMMT), 31-51 (PAVVGYILAGVVLGPSGFGLV), 56-76 (AVATLAEFGVLMLLFVIGMKL), 86-106 (KTAIFTTVLQIAGSVGTALLL), 113-133 (SLGLAVVLGCAVAVSSTAVVI), 176-196 (LLPADMARVVLSVLFLVLLFW), 269-289 (SVLLMVFFLSIGLLLDFKFIW), 294-314 (TVLTLLAMVTLFKTALNVTAL), 321-341 (WPSAFLAGVALAQIGEFSFLL), and 357-377 (KLVVAVTVLSLVLSPFWLFTM).

This sequence belongs to the monovalent cation:proton antiporter 2 (CPA2) transporter (TC 2.A.37) family.

It is found in the membrane. In terms of biological role, iron transporter, which is required for the synthesis of bacterial magnetic particles (BMPs). Probably involved in the transport of iron from the environment into the cytoplasm across the cell membrane, and then from the cytoplasm into the BMP lipid vesicle across the BMP membrane. The sequence is that of Iron transporter MagA (magA) from Paramagnetospirillum magneticum (strain ATCC 700264 / AMB-1) (Magnetospirillum magneticum).